Reading from the N-terminus, the 332-residue chain is Ubiquinol oxidase 1a, mitochondrial (332 aa).

The transit peptide at 1-54 (MSSRMAGSAILRHVGGVRLFTASATSPAAAAAAAARPFLAGGEAVPGVWGLRLM) directs the protein to the mitochondrion. A helical transmembrane segment spans residues 157 to 177 (AMMLETVAAVPGMVGGMLLHL). The Fe cation site is built by glutamate 161, glutamate 200, and histidine 203. Residues 219–239 (ALVITVQGVFFNAYFLGYLLS) traverse the membrane as a helical segment. Positions 251, 302, and 305 each coordinate Fe cation.

The protein belongs to the alternative oxidase family. Homodimer; disulfide-linked. It depends on Fe cation as a cofactor. As to expression, expressed in roots, leaf sheaths and leaf blades.

It is found in the mitochondrion inner membrane. The catalysed reaction is 2 a ubiquinol + O2 = 2 a ubiquinone + 2 H2O. In terms of biological role, catalyzes the cyanide-resistant oxidation of ubiquinol and the reduction of molecular oxygen to water, but does not translocate protons and consequently is not linked to oxidative phosphorylation. May increase respiration when the cytochrome respiratory pathway is restricted, or in response to low temperatures. The polypeptide is Ubiquinol oxidase 1a, mitochondrial (Oryza sativa subsp. japonica (Rice)).